The primary structure comprises 615 residues: Nuclear cap-binding protein subunit 3 (615 aa).

Lys12 is covalently cross-linked (Glycyl lysine isopeptide (Lys-Gly) (interchain with G-Cter in SUMO2)). A compositionally biased stretch (low complexity) spans Ala15 to Glu27. The interval Ala15–Glu43 is disordered. Ser25 carries the post-translational modification Phosphoserine. Residue Lys70 forms a Glycyl lysine isopeptide (Lys-Gly) (interchain with G-Cter in SUMO2) linkage. Ser73 is subject to Phosphoserine. The tract at residues Glu126–Met187 is RNA recognition motif (RRM) domain. A WLDD motif; essential for 7-methylguanosine-containing mRNA cap binding motif is present at residues Trp155–Asp158. Disordered stretches follow at residues Pro182–Leu233 and His332–Asp400. The span at Asp185 to Asp208 shows a compositional bias: basic and acidic residues. Residue Lys186 forms a Glycyl lysine isopeptide (Lys-Gly) (interchain with G-Cter in SUMO2) linkage. Ser209 and Ser210 each carry phosphoserine. 2 stretches are compositionally biased toward acidic residues: residues Ser209 to Leu230 and Glu341 to Ala360. The segment covering Asp361–Leu383 has biased composition (basic and acidic residues). The residue at position 408 (Thr408) is a Phosphothreonine. Ser410 carries the post-translational modification Phosphoserine. 2 disordered regions span residues Ser430 to Pro454 and Glu467 to Ser615. A compositionally biased stretch (basic and acidic residues) spans Val506–Ser516. Lys536 is covalently cross-linked (Glycyl lysine isopeptide (Lys-Gly) (interchain with G-Cter in SUMO2)). 2 stretches are compositionally biased toward basic and acidic residues: residues Lys549 to Gly564 and Ile580 to Leu593. Ser563 bears the Phosphoserine mark. Residues Glu606–Ser615 show a composition bias toward low complexity. Position 615 is a phosphoserine (Ser615).

The protein belongs to the NCBP3 family. In terms of assembly, component of an alternative cap-binding complex (CBC) composed of NCBP1/CBP80 and NCBP3. Interacts with SRRT, KPNA3, THOC5 and EIF4A3.

The protein resides in the nucleus. It is found in the cytoplasm. Associates with NCBP1/CBP80 to form an alternative cap-binding complex (CBC) which plays a key role in mRNA export. NCBP3 serves as adapter protein linking the capped RNAs (m7GpppG-capped RNA) to NCBP1/CBP80. Unlike the conventional CBC with NCBP2 which binds both small nuclear RNA (snRNA) and messenger (mRNA) and is involved in their export from the nucleus, the alternative CBC with NCBP3 does not bind snRNA and associates only with mRNA thereby playing a role in only mRNA export. The alternative CBC is particularly important in cellular stress situations such as virus infections and the NCBP3 activity is critical to inhibit virus growth. This Mus musculus (Mouse) protein is Nuclear cap-binding protein subunit 3.